We begin with the raw amino-acid sequence, 396 residues long: MNDNPVRNFAINFGPQHPAAHGVLRLVLELDGEVVERVDPHIGLLHRGTEKLMEARTYLQNVPYFDRLDYVAPMNQEHAFCLAIEKLLGIEVPRRGQLLRVLWCEIGRILSHLLNVTTQAMDVGALTPPLWGFEEREKLMVFYERASGARMHANYFRPGGVHIDCPQQLIDDIGAWCDPFLKVCDDLNDLFIENRIFKQRNVDIGVISLEDCWRWGFSGVMVRGSGAAWDLRKAQPYECYEEMDFDIPVGRHGDNYDRQVIRMEEMRQSTKIMKQCVEKLSQASGKGPVATPQHKVVPPSRAEMKRSMEALIHHFKLYTEGFHVPAGEVYCGVEAPKGEFGVYLVSDGTDKPYRCKIRAPGFAHLSAMDFLCRKSMLADVSAILGSLDIVFGEVDR.

The protein belongs to the complex I 49 kDa subunit family. In terms of assembly, NDH-1 is composed of 14 different subunits. Subunits NuoB, C, D, E, F, and G constitute the peripheral sector of the complex.

It is found in the cell inner membrane. The enzyme catalyses a quinone + NADH + 5 H(+)(in) = a quinol + NAD(+) + 4 H(+)(out). NDH-1 shuttles electrons from NADH, via FMN and iron-sulfur (Fe-S) centers, to quinones in the respiratory chain. The immediate electron acceptor for the enzyme in this species is believed to be ubiquinone. Couples the redox reaction to proton translocation (for every two electrons transferred, four hydrogen ions are translocated across the cytoplasmic membrane), and thus conserves the redox energy in a proton gradient. This Beijerinckia indica subsp. indica (strain ATCC 9039 / DSM 1715 / NCIMB 8712) protein is NADH-quinone oxidoreductase subunit D 1.